Reading from the N-terminus, the 439-residue chain is Glutamate--tRNA ligase 2 (439 aa).

The 'HIGH' region motif lies at 6-16 (PSPTGDMHIGN). Positions 232–236 (KMSKR) match the 'KMSKS' region motif. Lysine 235 contacts ATP.

This sequence belongs to the class-I aminoacyl-tRNA synthetase family. Glutamate--tRNA ligase type 1 subfamily. As to quaternary structure, monomer.

It localises to the cytoplasm. It catalyses the reaction tRNA(Glu) + L-glutamate + ATP = L-glutamyl-tRNA(Glu) + AMP + diphosphate. Its function is as follows. Catalyzes the attachment of glutamate to tRNA(Glu) in a two-step reaction: glutamate is first activated by ATP to form Glu-AMP and then transferred to the acceptor end of tRNA(Glu). This chain is Glutamate--tRNA ligase 2, found in Helicobacter pylori (strain HPAG1).